The sequence spans 104 residues: Urease subunit beta (104 aa).

This sequence belongs to the urease beta subunit family. As to quaternary structure, heterotrimer of UreA (gamma), UreB (beta) and UreC (alpha) subunits. Three heterotrimers associate to form the active enzyme.

It localises to the cytoplasm. It carries out the reaction urea + 2 H2O + H(+) = hydrogencarbonate + 2 NH4(+). It participates in nitrogen metabolism; urea degradation; CO(2) and NH(3) from urea (urease route): step 1/1. This Rhodopseudomonas palustris (strain BisB5) protein is Urease subunit beta.